A 96-amino-acid polypeptide reads, in one-letter code: Co-chaperonin GroES (96 aa).

The protein belongs to the GroES chaperonin family. In terms of assembly, heptamer of 7 subunits arranged in a ring. Interacts with the chaperonin GroEL.

The protein localises to the cytoplasm. In terms of biological role, together with the chaperonin GroEL, plays an essential role in assisting protein folding. The GroEL-GroES system forms a nano-cage that allows encapsulation of the non-native substrate proteins and provides a physical environment optimized to promote and accelerate protein folding. GroES binds to the apical surface of the GroEL ring, thereby capping the opening of the GroEL channel. This chain is Co-chaperonin GroES, found in Tremblaya princeps.